The primary structure comprises 259 residues: Glucosamine-6-phosphate deaminase (259 aa).

Asp66 (proton acceptor; for enolization step) is an active-site residue. The active-site For ring-opening step is Asp135. Catalysis depends on His137, which acts as the Proton acceptor; for ring-opening step. Catalysis depends on Glu142, which acts as the For ring-opening step.

This sequence belongs to the glucosamine/galactosamine-6-phosphate isomerase family. NagB subfamily.

The catalysed reaction is alpha-D-glucosamine 6-phosphate + H2O = beta-D-fructose 6-phosphate + NH4(+). It functions in the pathway amino-sugar metabolism; N-acetylneuraminate degradation; D-fructose 6-phosphate from N-acetylneuraminate: step 5/5. Catalyzes the reversible isomerization-deamination of glucosamine 6-phosphate (GlcN6P) to form fructose 6-phosphate (Fru6P) and ammonium ion. This is Glucosamine-6-phosphate deaminase from Pseudarthrobacter chlorophenolicus (strain ATCC 700700 / DSM 12829 / CIP 107037 / JCM 12360 / KCTC 9906 / NCIMB 13794 / A6) (Arthrobacter chlorophenolicus).